The following is a 472-amino-acid chain: Siroheme synthase 1 (472 aa).

Residues 1–203 (MDYLPLFADL…GQLTEAENEL (203 aa)) are precorrin-2 dehydrogenase /sirohydrochlorin ferrochelatase. NAD(+)-binding positions include 22-23 (EV) and 43-44 (QT). Ser-128 is modified (phosphoserine). The segment at 215 to 472 (GEVALVGAGP…AISPSVVNLA (258 aa)) is uroporphyrinogen-III C-methyltransferase. Pro-224 lines the S-adenosyl-L-methionine pocket. The Proton acceptor role is filled by Asp-247. Catalysis depends on Lys-269, which acts as the Proton donor. S-adenosyl-L-methionine-binding positions include 300-302 (GGD), Ile-305, 330-331 (TA), Met-382, and Gly-411.

It in the N-terminal section; belongs to the precorrin-2 dehydrogenase / sirohydrochlorin ferrochelatase family. This sequence in the C-terminal section; belongs to the precorrin methyltransferase family.

It catalyses the reaction uroporphyrinogen III + 2 S-adenosyl-L-methionine = precorrin-2 + 2 S-adenosyl-L-homocysteine + H(+). It carries out the reaction precorrin-2 + NAD(+) = sirohydrochlorin + NADH + 2 H(+). The catalysed reaction is siroheme + 2 H(+) = sirohydrochlorin + Fe(2+). It functions in the pathway cofactor biosynthesis; adenosylcobalamin biosynthesis; precorrin-2 from uroporphyrinogen III: step 1/1. Its pathway is cofactor biosynthesis; adenosylcobalamin biosynthesis; sirohydrochlorin from precorrin-2: step 1/1. It participates in porphyrin-containing compound metabolism; siroheme biosynthesis; precorrin-2 from uroporphyrinogen III: step 1/1. The protein operates within porphyrin-containing compound metabolism; siroheme biosynthesis; siroheme from sirohydrochlorin: step 1/1. It functions in the pathway porphyrin-containing compound metabolism; siroheme biosynthesis; sirohydrochlorin from precorrin-2: step 1/1. Its function is as follows. Multifunctional enzyme that catalyzes the SAM-dependent methylations of uroporphyrinogen III at position C-2 and C-7 to form precorrin-2 via precorrin-1. Then it catalyzes the NAD-dependent ring dehydrogenation of precorrin-2 to yield sirohydrochlorin. Finally, it catalyzes the ferrochelation of sirohydrochlorin to yield siroheme. The polypeptide is Siroheme synthase 1 (Yersinia pseudotuberculosis serotype I (strain IP32953)).